The sequence spans 483 residues: Probable zinc metalloprotease PTRG_04977 (483 aa).

The N-terminal stretch at 1–18 (MLFRSALLSNVLLLPACA) is a signal peptide. Asparagine 96 and asparagine 121 each carry an N-linked (GlcNAc...) asparagine glycan. Positions 167, 187, and 220 each coordinate Zn(2+). An N-linked (GlcNAc...) asparagine glycan is attached at asparagine 235. Aspartate 247 lines the Zn(2+) pocket. 5 N-linked (GlcNAc...) asparagine glycosylation sites follow: asparagine 310, asparagine 362, asparagine 401, asparagine 411, and asparagine 421. The Fibronectin type-III domain occupies 396 to 483 (PAMPRNVTID…KSPAVYPFPG (88 aa)).

The protein belongs to the peptidase M28 family. M28B subfamily. Requires Zn(2+) as cofactor.

It is found in the secreted. The polypeptide is Probable zinc metalloprotease PTRG_04977 (Pyrenophora tritici-repentis (strain Pt-1C-BFP) (Wheat tan spot fungus)).